The chain runs to 229 residues: Coiled-coil domain-containing protein 134 (229 aa).

The signal sequence occupies residues 1–22 (MDLLQSLAVFFVLLLPGTEVTG). A glycan (N-linked (GlcNAc...) asparagine) is linked at N148. Residues 191 to 229 (PSTDPFQKALREEEKRRKKEEKRKEIRKGPRISRSQSEL) are disordered. The stretch at 196-218 (FQKALREEEKRRKKEEKRKEIRK) forms a coiled coil. The Prevents secretion from ER signature appears at 226-229 (QSEL).

It belongs to the CCDC134 family. Interacts with TADA2A. Associates with the PCAF complex via TADA2A binding. In terms of processing, O-glycosylated, with additional sialic acid modifications.

It localises to the endoplasmic reticulum lumen. The protein resides in the secreted. It is found in the cytoplasm. The protein localises to the nucleus. Its function is as follows. Molecular adapter required to prevent protein hyperglycosylation of HSP90B1: during translation, associates with nascent HSP90B1 and the STT3A catalytic component of the OST-A complex and tethers them to a specialized translocon that forms a microenvironment for HSP90B1 folding. In the CCDC134-containing translocon, STT3A associates with the SRT pseudosubstrate motif of HSP90B1, preventing access to facultative glycosylation sites until folding is completed, preventing hyperglycosylation and subsequent degradation of HSP90B1. In extracellular secreted form, promotes proliferation and activation of CD8(+) T-cells, suggesting a cytokine-like function. May inhibit ERK and JNK signaling activity. May suppress cell migration and invasion activity, via its effects on ERK and JNK signaling. May also localize in the nucleus: enhances stability of the PCAF histone acetyltransferase (HAT) complex member TADA2A and thus promotes PCAF-mediated histone acetyltransferase activity. Has a critical role in the regulation of osteogenesis and bone development. In Rattus norvegicus (Rat), this protein is Coiled-coil domain-containing protein 134 (Ccdc134).